We begin with the raw amino-acid sequence, 313 residues long: Isoaspartyl peptidase (313 aa).

The active-site Nucleophile is threonine 179. Substrate-binding positions include 207–210 and 230–233; these read RVGD and TGTG.

The protein belongs to the Ntn-hydrolase family. As to quaternary structure, heterotetramer of two alpha and two beta chains arranged as a dimer of alpha/beta heterodimers. Post-translationally, autocleaved. Generates the alpha and beta subunits. The beta subunit is thought to be responsible for the nucleophile hydrolase activity.

It carries out the reaction Cleavage of a beta-linked Asp residue from the N-terminus of a polypeptide.. Functionally, degrades proteins damaged by L-isoaspartyl residue formation (also known as beta-Asp residues). Degrades L-isoaspartyl-containing di- and tripeptides. Acts best on iso-Asp-Leu, followed by iso-Asp-Ala, -His and to a lesser extent iso-Asp-Lys, -Phe and iso-Asp-Leu-Ala. Does not act on internal iso-Asp bonds (Als-iso-Asp-Leu-Ala). Does not act on alpha-Asp bonds. Has poor L-asparaginase activity. This is Isoaspartyl peptidase (iaaA) from Salmonella typhimurium (strain LT2 / SGSC1412 / ATCC 700720).